Here is a 135-residue protein sequence, read N- to C-terminus: Transcription antitermination protein NusB (135 aa).

It belongs to the NusB family.

In terms of biological role, involved in transcription antitermination. Required for transcription of ribosomal RNA (rRNA) genes. Binds specifically to the boxA antiterminator sequence of the ribosomal RNA (rrn) operons. The chain is Transcription antitermination protein NusB from Clostridium acetobutylicum (strain ATCC 824 / DSM 792 / JCM 1419 / IAM 19013 / LMG 5710 / NBRC 13948 / NRRL B-527 / VKM B-1787 / 2291 / W).